We begin with the raw amino-acid sequence, 612 residues long: Coagulation factor X-activating enzyme heavy chain (612 aa).

The N-terminal stretch at 1–20 (MMQVLLVTISLAVFPYQGSS) is a signal peptide. The propeptide at 21–193 (IILESGNVND…KKASQLVATS (173 aa)) is or 194. Residues 201–395 (TFIELVIVVD…YKPKCILNPP (195 aa)) form the Peptidase M12B domain. Residue glutamate 204 coordinates Ca(2+). An N-linked (GlcNAc...) asparagine glycan is attached at asparagine 259. Aspartate 286 contributes to the Ca(2+) binding site. 3 disulfide bridges follow: cysteine 310/cysteine 390, cysteine 350/cysteine 374, and cysteine 352/cysteine 357. Zn(2+) is bound at residue histidine 335. Residue glutamate 336 is part of the active site. The Zn(2+) site is built by histidine 339 and histidine 345. 2 N-linked (GlcNAc...) asparagine glycosylation sites follow: asparagine 353 and asparagine 373. Residues cysteine 390, asparagine 393, isoleucine 405, asparagine 408, glutamate 412, glutamate 415, and aspartate 418 each contribute to the Ca(2+) site. Positions 403-489 (PPICGNEIWE…ECPADGFHAN (87 aa)) constitute a Disintegrin domain. Cysteine 461 and cysteine 481 form a disulfide bridge. Residues 467–469 (ECD) carry the D/ECD-tripeptide motif.

The protein belongs to the venom metalloproteinase (M12B) family. P-III subfamily. P-IIId sub-subfamily. In terms of assembly, heterotrimer; disulfide-linked. The heterotrimer consists of 1 heavy chain and 2 light chains (lectins): LC1 and LC2 (AC Q7T045 and AC Q696W1). Zn(2+) serves as cofactor. In terms of processing, N-glycosylated. Contains 8.0% of hexoses, 2.5% of hexosamines and 2.5% of sialic acids. Expressed by the venom gland.

It localises to the secreted. The catalysed reaction is Specifically activates several components of the blood clotting system, including coagulation factor X, coagulation factor IX and protein C by cleavage of Arg-|-Xaa bonds. Has no action on insulin B chain.. Its activity is regulated as follows. Calcium is required for the activity of the heterotrimer. In terms of biological role, catalytic subunit of blood coagulation factor X-activating enzyme. Activates coagulation factor X (F10) by cleaving the Arg(234)-Ile(235) bond, activates coagulation factor IX (F9) by cleaving the Arg(226)-Val(227) bond and is also able to activate protein C (PROC). This chain is Coagulation factor X-activating enzyme heavy chain, found in Macrovipera lebetinus (Levantine viper).